A 133-amino-acid polypeptide reads, in one-letter code: Profilin (133 aa).

It belongs to the profilin family. As to quaternary structure, occurs in many kinds of cells as a complex with monomeric actin in a 1:1 ratio.

The protein localises to the cytoplasm. It localises to the cytoskeleton. In terms of biological role, binds to actin and affects the structure of the cytoskeleton. At high concentrations, profilin prevents the polymerization of actin, whereas it enhances it at low concentrations. By binding to PIP2, it inhibits the formation of IP3 and DG. The polypeptide is Profilin (Mercurialis annua (Annual mercury)).